We begin with the raw amino-acid sequence, 709 residues long: NAD(P)H-quinone oxidoreductase subunit 5, chloroplastic (709 aa).

The next 14 helical transmembrane spans lie at 9-29, 40-60, 89-109, 125-145, 147-167, 219-239, 257-277, 280-300, 327-347, 354-374, 396-416, 425-445, 540-560, and 594-614; these read WIIPFVPLPIPIKIGMGLLLF, WAFPNILLLSIVMIFSVDLSI, IDSLTSIMSILITTVGIFVLI, FAYMSLFNTSMLGLLTXSNLI, IYXFWELVGMCSYLLIGFWFT, NEVHFLFVTLCASLLFAGAVA, PTPISALIHAATMVAAGIFLV, LLPLFIVIPYIMNLISLIGII, LGYMMLALGMGSYRAALFHLI, ALLFLGSGSIIHSMEAIVGYS, IAFLVGTLSLCGIPPLACFWS, WLYSPIFAIIAWSTAGLTASY, LFPMLILVLFTLFVGAIAIPF, and FLTNATFSVSIASFGIFTAFL.

It belongs to the complex I subunit 5 family. In terms of assembly, NDH is composed of at least 16 different subunits, 5 of which are encoded in the nucleus.

It localises to the plastid. It is found in the chloroplast thylakoid membrane. It catalyses the reaction a plastoquinone + NADH + (n+1) H(+)(in) = a plastoquinol + NAD(+) + n H(+)(out). The enzyme catalyses a plastoquinone + NADPH + (n+1) H(+)(in) = a plastoquinol + NADP(+) + n H(+)(out). Its function is as follows. NDH shuttles electrons from NAD(P)H:plastoquinone, via FMN and iron-sulfur (Fe-S) centers, to quinones in the photosynthetic chain and possibly in a chloroplast respiratory chain. The immediate electron acceptor for the enzyme in this species is believed to be plastoquinone. Couples the redox reaction to proton translocation, and thus conserves the redox energy in a proton gradient. This chain is NAD(P)H-quinone oxidoreductase subunit 5, chloroplastic (ndhF), found in Pachira aquatica (Guiana chestnut).